We begin with the raw amino-acid sequence, 1132 residues long: MDPGVGNALGEGPPAPRPRRRRSLRRLLNRFLLALGSRSRSGDSPPRPPAQPSPYDGDGEGGFACAPGPAPASAGSPGPDRPPGSQPQISSGDGARPPGAQGLKNHGNTCFMNAVVQCLSNTDLLAEFLALGRYRAAPGRAEVTEQLAALVRALWTREYTPQLSAEFKNAVSKYGSQFQGNSQHDALEFLLWLLDRVHEDLEGSAHGLVSEQLPPEVSKISEDLRPSAAPTSLGPSFVQSHFQAQYRSSLTCPHCLKQSNTFDPFLCVSLPIPLRQTRFLSVTLVFPSKSQRFLRVGLAVPILSTVAALRKMVAEEGGVPAEEVILVELYPNGFQRSFFDEEDLNTIAEGDNVYAFQVPPSPGLGTLSAHPSGLSVSPRLPVRDSQRFSGPLHSENRVVFLFCNLVGSGQQASRFGPPFLIREDRTISWAQLQQCILSKVRCLMRSEVSAQDLGTLFSIRVVGLSLACSYLSPKDNRPLCHWAVDRALHLRRPGGPPHVKLAVEWDSSVTERLFGSLQEERVQDADSVWRQQQAHQQPSCTLDECFQSYTKEEQLAQDDAWKCPHCQVLQQGVVKLSLWTLPDILIIHLKRFCQVGERRNKLSTLVKFPLSGLNMAPHVARRSTNSKAGPGPWSSWKQPICLPTTYPLDFLYDLYAVCNHHGSLQGGHYTAYCRNSLDGQWYSYDDSTVEALREDEVNTRGAYILFYQKRNSIPPWSASSSMRGSTSSSLSDHWLMRLGSLNNSTRGSLLSWSSAPCPSMARVPDSPVFTNGVCHQDKGGVETRPLVRGVGGRSISMKASPASRSRHGPFKTMPLRWSFGHREKRPGASVELVEYLESRRRPRSTSQSIVPLLTRAAGGEETSASPRSDGTLPAKSEDSGRAIGQGTTGVPLSSCHLNHHPALGSLDDSLHTARTRTGNVSQDIRLPKKFDLPLTVMPSVGDEKPARPEGQKMTPWKGSSQVGSQSSPPSPSTGLLRNFKDSGPGTLPKMKSKAAMEERAPDKDRGQGTFTLLKSVFWKKEHKRTVRTESSPPAPPISLGSDRLSPAAMNEQALRIRESPAKGLGNHMERDIRSAPSSLHLPRKASRPPRASTAGTSQRTIPGEQISYGTLQRVKYHTLSLGRKKSLPESSF.

Residues 1–103 (MDPGVGNALG…GARPPGAQGL (103 aa)) are disordered. The span at 17–28 (RPRRRRSLRRLL) shows a compositional bias: basic residues. 2 stretches are compositionally biased toward low complexity: residues 29–44 (NRFL…SGDS) and 63–78 (FACA…GSPG). The USP domain occupies 101 to 710 (QGLKNHGNTC…GAYILFYQKR (610 aa)). Cysteine 110 (nucleophile) is an active-site residue. The active-site Proton acceptor is histidine 668. Asymmetric dimethylarginine is present on arginine 746. Disordered stretches follow at residues 839 to 891 (RRRP…TGVP), 935 to 1008 (TVMP…RGQG), 1024 to 1044 (RTVR…SDRL), and 1057 to 1106 (RESP…GEQI). Over residues 941–950 (GDEKPARPEG) the composition is skewed to basic and acidic residues. Positions 958–967 (GSSQVGSQSS) are enriched in low complexity. Serine 970 is subject to Phosphoserine. Residues 994–1006 (AAMEERAPDKDRG) are compositionally biased toward basic and acidic residues.

It belongs to the peptidase C19 family.

It catalyses the reaction Thiol-dependent hydrolysis of ester, thioester, amide, peptide and isopeptide bonds formed by the C-terminal Gly of ubiquitin (a 76-residue protein attached to proteins as an intracellular targeting signal).. Functionally, may recognize and hydrolyze the peptide bond at the C-terminal Gly of ubiquitin. Involved in the processing of poly-ubiquitin precursors as well as that of ubiquitinated proteins. The protein is Ubiquitin carboxyl-terminal hydrolase 43 (Usp43) of Mus musculus (Mouse).